We begin with the raw amino-acid sequence, 157 residues long: MSSSIREEVHRHLGTVALMQPALHQQTHAPAPTEITHTLFRAYTRVPHDVGGEADVPIEYHEKEEEIWELNTFATCECLAWRGVWTAEERRRKQNCDVGQTVYLGMPYYGRWLLTAARILVDKQFVTLTELHNKIVEMRERVASGQGLGEYLPPKAK.

As to quaternary structure, heterododecamer consisting of 4 alpha, 4 beta, and 4 gamma subunits.

The enzyme catalyses thiocyanate + H2O + 2 H(+) = carbonyl sulfide + NH4(+). It participates in organosulfur degradation; thiocyanate degradation. In terms of biological role, involved in the degradation of thiocyanate. In Thiobacillus thioparus, this protein is Thiocyanate hydrolase subunit beta (scnB).